Consider the following 178-residue polypeptide: Interleukin-1 receptor antagonist protein (178 aa).

An N-terminal signal peptide occupies residues 1–26; sequence MEICWGPYSHLISLLLILLFHSEAAC. Cys-92 and Cys-142 are oxidised to a cystine. Asn-110 carries N-linked (GlcNAc...) asparagine glycosylation.

This sequence belongs to the IL-1 family.

The protein resides in the secreted. Its subcellular location is the cytoplasm. In terms of biological role, anti-inflammatory antagonist of interleukin-1 family of proinflammatory cytokines such as interleukin-1beta/IL1B and interleukin-1alpha/IL1A. Protects from immune dysregulation and uncontrolled systemic inflammation triggered by IL1 for a range of innate stimulatory agents such as pathogens. In Mus musculus (Mouse), this protein is Interleukin-1 receptor antagonist protein (Il1rn).